The following is a 125-amino-acid chain: Large ribosomal subunit protein bL12 (125 aa).

The protein belongs to the bacterial ribosomal protein bL12 family. As to quaternary structure, homodimer. Part of the ribosomal stalk of the 50S ribosomal subunit. Forms a multimeric L10(L12)X complex, where L10 forms an elongated spine to which 2 to 4 L12 dimers bind in a sequential fashion. Binds GTP-bound translation factors.

Forms part of the ribosomal stalk which helps the ribosome interact with GTP-bound translation factors. Is thus essential for accurate translation. The protein is Large ribosomal subunit protein bL12 of Methylibium petroleiphilum (strain ATCC BAA-1232 / LMG 22953 / PM1).